The following is a 418-amino-acid chain: Equilibrative nucleotide transporter 3 (418 aa).

A run of 11 helical transmembrane segments spans residues 20–40 (MVVC…MLTI), 56–76 (VLTL…AYHE), 86–106 (LIGY…DLAT), 112–132 (IGPY…DATV), 142–162 (LMCP…GALT), 186–206 (MFLA…AYVF), 264–284 (YAVN…GFLY), 291–311 (GLGD…DLVG), 326–346 (KLIT…YFTA), 353–373 (WMIM…VCIM), and 392–412 (LVIF…LWLI).

This sequence belongs to the SLC29A/ENT transporter (TC 2.A.57) family. Expressed in root tips, vasculature of roots and leaves, and meristems of leaf primordia. Expressed in flowers and siliques.

It localises to the cell membrane. In terms of biological role, nucleoside transporter that functions as a pyrimidine nucleoside carrier in all organs. Has high affinity for adenosine and uridine when expressed in a heterologous system (yeast). Mediates proton-dependent adenosine or uridine transport in Xenopus oocytes. The polypeptide is Equilibrative nucleotide transporter 3 (Arabidopsis thaliana (Mouse-ear cress)).